Here is a 428-residue protein sequence, read N- to C-terminus: MKQLHLEPIACIDGEINIPGSKSISNRALLLATLAKGTTTLTNLLDSDDIRYMLASLEQLGVQFELSDDKTRCTVQGMGGAVSASTAQTLFLGNAGTAMRPLCAALTLGQGEFTLTGEPRMEERPIGDLVDALRQLGASVTYLKNDGFPPLTINATGLNGGDVDIAGDLSSQFLTALLMVAPLAKGKVNINIKGELVSKPYIDITLALMAQFGVDVQNHDYARFEINPGQQYLSPGKVLVEGDASSASYFLAAGAIAGGSVKVTGVGRLSIQGDVKFADALEKMGADIEWGDDFIIARSAKLSGIDMDMNHIPDAAMTIATAALFAEGETCLRNIYNWRIKETDRLHAMATELRKVGAVVEEGHDFIRITPPVKMNTAAIDTYNDHRMAMCFSLLAFADCGITINDPDCTSKTFPSYFAEFARLTQEA.

3 residues coordinate 3-phosphoshikimate: Lys-22, Ser-23, and Arg-27. Position 22 (Lys-22) interacts with phosphoenolpyruvate. Gly-96 and Arg-124 together coordinate phosphoenolpyruvate. 3-phosphoshikimate is bound by residues Ser-170, Ser-171, Gln-172, Ser-198, Asp-314, Asn-337, and Lys-341. A phosphoenolpyruvate-binding site is contributed by Gln-172. Asp-314 (proton acceptor) is an active-site residue. Residues Arg-345, Arg-387, and Lys-412 each contribute to the phosphoenolpyruvate site.

The protein belongs to the EPSP synthase family. In terms of assembly, monomer.

It is found in the cytoplasm. The enzyme catalyses 3-phosphoshikimate + phosphoenolpyruvate = 5-O-(1-carboxyvinyl)-3-phosphoshikimate + phosphate. It functions in the pathway metabolic intermediate biosynthesis; chorismate biosynthesis; chorismate from D-erythrose 4-phosphate and phosphoenolpyruvate: step 6/7. In terms of biological role, catalyzes the transfer of the enolpyruvyl moiety of phosphoenolpyruvate (PEP) to the 5-hydroxyl of shikimate-3-phosphate (S3P) to produce enolpyruvyl shikimate-3-phosphate and inorganic phosphate. This is 3-phosphoshikimate 1-carboxyvinyltransferase from Shewanella denitrificans (strain OS217 / ATCC BAA-1090 / DSM 15013).